The sequence spans 168 residues: Transcriptional repressor NrdR (168 aa).

A disordered region spans residues 1-21 (MQCPACRHTDSRVLESRSSES). A zinc finger lies at 3 to 34 (CPACRHTDSRVLESRSSESGRSVRRRRECLSC). Over residues 7–20 (RHTDSRVLESRSSE) the composition is skewed to basic and acidic residues. Residues 49–139 (ISVIKRNGDR…VYRQFRGVRD (91 aa)) form the ATP-cone domain.

It belongs to the NrdR family. The cofactor is Zn(2+).

Its function is as follows. Negatively regulates transcription of bacterial ribonucleotide reductase nrd genes and operons by binding to NrdR-boxes. The polypeptide is Transcriptional repressor NrdR (Synechococcus elongatus (strain ATCC 33912 / PCC 7942 / FACHB-805) (Anacystis nidulans R2)).